A 391-amino-acid chain; its full sequence is Formate-dependent phosphoribosylglycinamide formyltransferase (391 aa).

Residues 20–21 and glutamate 80 contribute to the N(1)-(5-phospho-beta-D-ribosyl)glycinamide site; that span reads EL. ATP-binding positions include arginine 112, lysine 153, 158–163, 193–196, and glutamate 201; these read SSGKGQ and EGFI. An ATP-grasp domain is found at 117–306; sequence RLAAETLGLP…EFALHVRAIQ (190 aa). Mg(2+) is bound by residues glutamate 265 and glutamate 277. Residues aspartate 284, lysine 354, and 361–362 each bind N(1)-(5-phospho-beta-D-ribosyl)glycinamide; that span reads RR.

This sequence belongs to the PurK/PurT family. As to quaternary structure, homodimer.

It catalyses the reaction N(1)-(5-phospho-beta-D-ribosyl)glycinamide + formate + ATP = N(2)-formyl-N(1)-(5-phospho-beta-D-ribosyl)glycinamide + ADP + phosphate + H(+). It functions in the pathway purine metabolism; IMP biosynthesis via de novo pathway; N(2)-formyl-N(1)-(5-phospho-D-ribosyl)glycinamide from N(1)-(5-phospho-D-ribosyl)glycinamide (formate route): step 1/1. In terms of biological role, involved in the de novo purine biosynthesis. Catalyzes the transfer of formate to 5-phospho-ribosyl-glycinamide (GAR), producing 5-phospho-ribosyl-N-formylglycinamide (FGAR). Formate is provided by PurU via hydrolysis of 10-formyl-tetrahydrofolate. This chain is Formate-dependent phosphoribosylglycinamide formyltransferase, found in Shewanella baltica (strain OS185).